We begin with the raw amino-acid sequence, 357 residues long: Uroporphyrinogen decarboxylase (357 aa).

Substrate contacts are provided by residues 27–31 (RQAGR), D77, Y154, S209, and H330.

This sequence belongs to the uroporphyrinogen decarboxylase family. In terms of assembly, homodimer.

It is found in the cytoplasm. It catalyses the reaction uroporphyrinogen III + 4 H(+) = coproporphyrinogen III + 4 CO2. It participates in porphyrin-containing compound metabolism; protoporphyrin-IX biosynthesis; coproporphyrinogen-III from 5-aminolevulinate: step 4/4. Its function is as follows. Catalyzes the decarboxylation of four acetate groups of uroporphyrinogen-III to yield coproporphyrinogen-III. This is Uroporphyrinogen decarboxylase from Acinetobacter baumannii (strain ATCC 17978 / DSM 105126 / CIP 53.77 / LMG 1025 / NCDC KC755 / 5377).